The following is a 356-amino-acid chain: Protein trichome birefringence-like 41 (356 aa).

A helical; Signal-anchor for type II membrane protein transmembrane segment spans residues 12-31 (SALVLSLLLLLLLPLLHEAA). The short motif at 107-109 (GDS) is the GDS motif element. A DCXHWCLPGXXDXWN motif motif is present at residues 333 to 347 (DCSHWCLSGVPDTWN).

This sequence belongs to the PC-esterase family. TBL subfamily.

It localises to the membrane. May act as a bridging protein that binds pectin and other cell wall polysaccharides. Probably involved in maintaining esterification of pectins. May be involved in the specific O-acetylation of cell wall polymers. The protein is Protein trichome birefringence-like 41 (TBL41) of Arabidopsis thaliana (Mouse-ear cress).